The chain runs to 595 residues: Adenine deaminase 2 (595 aa).

This sequence belongs to the metallo-dependent hydrolases superfamily. Adenine deaminase family. It depends on Mn(2+) as a cofactor.

It carries out the reaction adenine + H2O + H(+) = hypoxanthine + NH4(+). The chain is Adenine deaminase 2 from Rhizobium johnstonii (strain DSM 114642 / LMG 32736 / 3841) (Rhizobium leguminosarum bv. viciae).